The chain runs to 248 residues: Type II secretion system protein N (248 aa).

Topologically, residues 1 to 6 (MKLKSG) are cytoplasmic. The helical; Signal-anchor for type II membrane protein transmembrane segment at 7–27 (IVTGVALVLAYGLFLASYAPA) threads the bilayer. Over 28-248 (RLLTAVPLPA…RTLNFQGRLL (221 aa)) the chain is Periplasmic.

This sequence belongs to the GSP N family.

The protein resides in the cell inner membrane. Its function is as follows. Involved in a type II secretion system (T2SS, formerly general secretion pathway, GSP) for the export of proteins. Required for the translocation of the multiple pectic enzymes. This is Type II secretion system protein N (outN) from Pectobacterium carotovorum subsp. carotovorum (Erwinia carotovora subsp. carotovora).